Reading from the N-terminus, the 413-residue chain is Glucose-1-phosphatase (413 aa).

Positions 1–22 are cleaved as a signal peptide; it reads MKKSLLAVAVAGAVLLSSAVQA. R39 contributes to the substrate binding site. The active-site Nucleophile is the H40. Substrate contacts are provided by R43, R116, and E218. D312 acts as the Proton donor in catalysis.

Belongs to the histidine acid phosphatase family. As to quaternary structure, homodimer.

The protein localises to the periplasm. The enzyme catalyses alpha-D-glucose 1-phosphate + H2O = D-glucose + phosphate. In Salmonella typhimurium (strain LT2 / SGSC1412 / ATCC 700720), this protein is Glucose-1-phosphatase (agp).